Here is a 346-residue protein sequence, read N- to C-terminus: Phosphoribosylformylglycinamidine cyclo-ligase (346 aa).

Belongs to the AIR synthase family.

It is found in the cytoplasm. The catalysed reaction is 2-formamido-N(1)-(5-O-phospho-beta-D-ribosyl)acetamidine + ATP = 5-amino-1-(5-phospho-beta-D-ribosyl)imidazole + ADP + phosphate + H(+). It functions in the pathway purine metabolism; IMP biosynthesis via de novo pathway; 5-amino-1-(5-phospho-D-ribosyl)imidazole from N(2)-formyl-N(1)-(5-phospho-D-ribosyl)glycinamide: step 2/2. This Geobacillus thermodenitrificans (strain NG80-2) protein is Phosphoribosylformylglycinamidine cyclo-ligase.